The sequence spans 181 residues: Large ribosomal subunit protein uL5c (181 aa).

This sequence belongs to the universal ribosomal protein uL5 family. In terms of assembly, part of the 50S ribosomal subunit; contacts the 5S rRNA.

Its subcellular location is the plastid. It is found in the chloroplast. Functionally, binds 5S rRNA, forms part of the central protuberance of the 50S subunit. The protein is Large ribosomal subunit protein uL5c (rpl5) of Rhodomonas salina (Cryptomonas salina).